Here is a 78-residue protein sequence, read N- to C-terminus: Large ribosomal subunit protein bL28 (78 aa).

This sequence belongs to the bacterial ribosomal protein bL28 family.

The chain is Large ribosomal subunit protein bL28 from Synechococcus sp. (strain CC9605).